A 220-amino-acid chain; its full sequence is Deoxyribose-phosphate aldolase 2 (220 aa).

D89 functions as the Proton donor/acceptor in the catalytic mechanism. The active-site Schiff-base intermediate with acetaldehyde is K151. K180 (proton donor/acceptor) is an active-site residue.

This sequence belongs to the DeoC/FbaB aldolase family. DeoC type 1 subfamily.

It is found in the cytoplasm. The enzyme catalyses 2-deoxy-D-ribose 5-phosphate = D-glyceraldehyde 3-phosphate + acetaldehyde. The protein operates within carbohydrate degradation; 2-deoxy-D-ribose 1-phosphate degradation; D-glyceraldehyde 3-phosphate and acetaldehyde from 2-deoxy-alpha-D-ribose 1-phosphate: step 2/2. Functionally, catalyzes a reversible aldol reaction between acetaldehyde and D-glyceraldehyde 3-phosphate to generate 2-deoxy-D-ribose 5-phosphate. The protein is Deoxyribose-phosphate aldolase 2 of Staphylococcus aureus (strain COL).